Reading from the N-terminus, the 64-residue chain is uncharacterized protein (64 aa).

This is an uncharacterized protein from Escherichia phage lambda (Bacteriophage lambda).